The primary structure comprises 42 residues: Snaclec lebecetin subunit alpha (42 aa).

A C-type lectin domain is found at D1–V42. The cysteines at positions 4 and 15 are disulfide-linked.

Heterodimer of subunits alpha and beta; disulfide-linked. Ca(2+) serves as cofactor. In terms of processing, glycosylated. In terms of tissue distribution, expressed by the venom gland.

Its subcellular location is the secreted. Its function is as follows. Binds to the platelet GPIb/IX/V receptor system and inhibits ristocetin-induced platelet aggregation in human platelet-rich plasma. Strongly inhibits platelet aggregation induced by ADP, calcium ionophore, thrombin and collagen. Does not inhibit U46619-induced platelet aggregation. The protein is Snaclec lebecetin subunit alpha of Macrovipera lebetinus (Levantine viper).